The following is a 248-amino-acid chain: MILLISDLHLEQERPDITRAFLDLLAGRAREAESLYILGDFFEVWIGDDAMSPFQLSICKALRELSDSGTRIFLMHGNRDFMLGKGFCKAAGCTLLSDPSVVQLNGEPVLLMHGDSLCTRDEGYIRMRRYLRHPLTLFILRHLPLGTRHKLARKLRNESRAQTRMKANDIVDVTPDEVPRIMQQFGVRTLVHGHTHRPAIHKLQIGDQAARRIVLGDWDRQGWVLQVDEQGFNLSSFDFVPETVALLN.

D7, H9, D40, N78, and H113 together coordinate Mn(2+). 78–79 (NR) contacts substrate. D121, S159, T163, K166, and H194 together coordinate substrate. Mn(2+) contacts are provided by H194 and H196.

This sequence belongs to the LpxH family. Mn(2+) serves as cofactor.

The protein localises to the cell inner membrane. The catalysed reaction is UDP-2-N,3-O-bis[(3R)-3-hydroxytetradecanoyl]-alpha-D-glucosamine + H2O = 2-N,3-O-bis[(3R)-3-hydroxytetradecanoyl]-alpha-D-glucosaminyl 1-phosphate + UMP + 2 H(+). It functions in the pathway glycolipid biosynthesis; lipid IV(A) biosynthesis; lipid IV(A) from (3R)-3-hydroxytetradecanoyl-[acyl-carrier-protein] and UDP-N-acetyl-alpha-D-glucosamine: step 4/6. Its function is as follows. Hydrolyzes the pyrophosphate bond of UDP-2,3-diacylglucosamine to yield 2,3-diacylglucosamine 1-phosphate (lipid X) and UMP by catalyzing the attack of water at the alpha-P atom. Involved in the biosynthesis of lipid A, a phosphorylated glycolipid that anchors the lipopolysaccharide to the outer membrane of the cell. The chain is UDP-2,3-diacylglucosamine hydrolase from Pseudomonas syringae pv. syringae (strain B728a).